The sequence spans 207 residues: LexA repressor (207 aa).

Positions 28-48 (RAEIAQKLGFKSANAAEEHLK) form a DNA-binding region, H-T-H motif. Catalysis depends on for autocatalytic cleavage activity residues Ser124 and Lys161.

This sequence belongs to the peptidase S24 family. Homodimer.

The enzyme catalyses Hydrolysis of Ala-|-Gly bond in repressor LexA.. In terms of biological role, represses a number of genes involved in the response to DNA damage (SOS response), including recA and lexA. In the presence of single-stranded DNA, RecA interacts with LexA causing an autocatalytic cleavage which disrupts the DNA-binding part of LexA, leading to derepression of the SOS regulon and eventually DNA repair. This chain is LexA repressor, found in Aeromonas hydrophila subsp. hydrophila (strain ATCC 7966 / DSM 30187 / BCRC 13018 / CCUG 14551 / JCM 1027 / KCTC 2358 / NCIMB 9240 / NCTC 8049).